The sequence spans 213 residues: High frequency lysogenization protein HflD homolog (213 aa).

The protein belongs to the HflD family.

The protein localises to the cytoplasm. It localises to the cell inner membrane. The sequence is that of High frequency lysogenization protein HflD homolog from Nitrosococcus oceani (strain ATCC 19707 / BCRC 17464 / JCM 30415 / NCIMB 11848 / C-107).